A 635-amino-acid chain; its full sequence is Biosynthetic arginine decarboxylase (635 aa).

At lysine 100 the chain carries N6-(pyridoxal phosphate)lysine. 282 to 292 (LDIGGGLGVDY) serves as a coordination point for substrate.

This sequence belongs to the Orn/Lys/Arg decarboxylase class-II family. SpeA subfamily. Mg(2+) serves as cofactor. Pyridoxal 5'-phosphate is required as a cofactor.

The enzyme catalyses L-arginine + H(+) = agmatine + CO2. It participates in amine and polyamine biosynthesis; agmatine biosynthesis; agmatine from L-arginine: step 1/1. Its function is as follows. Catalyzes the biosynthesis of agmatine from arginine. The chain is Biosynthetic arginine decarboxylase from Geotalea uraniireducens (strain Rf4) (Geobacter uraniireducens).